Consider the following 297-residue polypeptide: Homoserine kinase (297 aa).

82–92 (PVSRGLGSSAA) lines the ATP pocket.

This sequence belongs to the GHMP kinase family. Homoserine kinase subfamily.

The protein resides in the cytoplasm. The catalysed reaction is L-homoserine + ATP = O-phospho-L-homoserine + ADP + H(+). Its pathway is amino-acid biosynthesis; L-threonine biosynthesis; L-threonine from L-aspartate: step 4/5. Catalyzes the ATP-dependent phosphorylation of L-homoserine to L-homoserine phosphate. The sequence is that of Homoserine kinase from Clostridium botulinum (strain Loch Maree / Type A3).